The chain runs to 308 residues: 1D-myo-inositol 2-acetamido-2-deoxy-alpha-D-glucopyranoside deacetylase (308 aa).

His-18, Asp-21, and His-153 together coordinate Zn(2+).

Belongs to the MshB deacetylase family. Zn(2+) is required as a cofactor.

It carries out the reaction 1D-myo-inositol 2-acetamido-2-deoxy-alpha-D-glucopyranoside + H2O = 1D-myo-inositol 2-amino-2-deoxy-alpha-D-glucopyranoside + acetate. Functionally, catalyzes the deacetylation of 1D-myo-inositol 2-acetamido-2-deoxy-alpha-D-glucopyranoside (GlcNAc-Ins) in the mycothiol biosynthesis pathway. The chain is 1D-myo-inositol 2-acetamido-2-deoxy-alpha-D-glucopyranoside deacetylase from Salinispora arenicola (strain CNS-205).